The chain runs to 318 residues: Transaldolase (318 aa).

Residue Lys131 is the Schiff-base intermediate with substrate of the active site.

Belongs to the transaldolase family. Type 1 subfamily. In terms of assembly, homodimer.

Its subcellular location is the cytoplasm. It catalyses the reaction D-sedoheptulose 7-phosphate + D-glyceraldehyde 3-phosphate = D-erythrose 4-phosphate + beta-D-fructose 6-phosphate. It functions in the pathway carbohydrate degradation; pentose phosphate pathway; D-glyceraldehyde 3-phosphate and beta-D-fructose 6-phosphate from D-ribose 5-phosphate and D-xylulose 5-phosphate (non-oxidative stage): step 2/3. Transaldolase is important for the balance of metabolites in the pentose-phosphate pathway. The protein is Transaldolase of Cellvibrio japonicus (strain Ueda107) (Pseudomonas fluorescens subsp. cellulosa).